A 234-amino-acid chain; its full sequence is Adenosine 5'-phosphosulfate reductase (234 aa).

4 residues coordinate [4Fe-4S] cluster: Cys-120, Cys-121, Cys-203, and Cys-206. The active-site Nucleophile; cysteine thiosulfonate intermediate is Cys-229.

It belongs to the PAPS reductase family. CysH subfamily. [4Fe-4S] cluster serves as cofactor.

Its subcellular location is the cytoplasm. The enzyme catalyses [thioredoxin]-disulfide + sulfite + AMP + 2 H(+) = adenosine 5'-phosphosulfate + [thioredoxin]-dithiol. It participates in sulfur metabolism; hydrogen sulfide biosynthesis; sulfite from sulfate. Its function is as follows. Catalyzes the formation of sulfite from adenosine 5'-phosphosulfate (APS) using thioredoxin as an electron donor. The polypeptide is Adenosine 5'-phosphosulfate reductase (Bacillus cereus (strain AH820)).